The following is a 357-amino-acid chain: MACLKLQAVTKSYDGVTPVIKQIDLDVADGEFIVMVGPSGCGKSTLLRMVAGLERTTTGDIYIGDQRVTDLEPKDRGIAMVFQNYALYPHMNVFDNMAYGLKIRGFGKEQIRQRVDEAARILELQPLLKRKPRELSGGQRQRVAMGRAIVREPAVFLFDEPLSNLDAKLRVQMRLELQQLHRRLKTTSLYVTHDQVEAMTLAQRVIVMNKGVAEQIGTPSEVYKRPASLFVASFIGSPAMNLLDGTVSPDGRTFILSDGLTLPLEIPQPQWGGRRLTLGIRPEHIQQTTSAQGVPMNLLTLELLGADNLAHGLWGGQSIIARLSHEEMPVAGSTLHLYLPPAALHFFDTDSGLRIEP.

The 232-residue stretch at 4 to 235 (LKLQAVTKSY…PASLFVASFI (232 aa)) folds into the ABC transporter domain. 37 to 44 (GPSGCGKS) contacts ATP.

This sequence belongs to the ABC transporter superfamily. sn-glycerol-3-phosphate importer (TC 3.A.1.1.3) family. The complex is composed of two ATP-binding proteins (UgpC), two transmembrane proteins (UgpA and UgpE) and a solute-binding protein (UgpB).

It is found in the cell inner membrane. The enzyme catalyses sn-glycerol 3-phosphate(out) + ATP + H2O = sn-glycerol 3-phosphate(in) + ADP + phosphate + H(+). In terms of biological role, part of the ABC transporter complex UgpBAEC involved in sn-glycerol-3-phosphate (G3P) import. Responsible for energy coupling to the transport system. The sequence is that of sn-glycerol-3-phosphate import ATP-binding protein UgpC from Yersinia pseudotuberculosis serotype I (strain IP32953).